An 807-amino-acid chain; its full sequence is PGC-1 and ERR-induced regulator in muscle protein 1 (807 aa).

Disordered stretches follow at residues Gln29–Ala80, Cys121–Ser391, and Pro517–Arg548. 2 stretches are compositionally biased toward low complexity: residues Ser40–Ser52 and Pro145–Pro160. A compositionally biased stretch (polar residues) spans His162–Asp171. Positions Pro180–Lys194 are enriched in basic residues. Composition is skewed to polar residues over residues His195–Leu211, Lys311–Ala346, and Ala363–Ser391. Phosphoserine is present on Ser198. Position 534 is a phosphothreonine (Thr534). Residue Arg548 is modified to Omega-N-methylarginine.

In terms of tissue distribution, highly expressed in skeletal muscles and heart with lower levels in brown adipose tissue (at protein level). Muscle-specific expression is increased by endurance exercise.

The protein resides in the cytoplasm. It is found in the nucleus. Regulates the expression of selective PPARGC1A/B and ESRRA/B/G target genes with roles in glucose and lipid metabolism, energy transfer, contractile function, muscle mitochondrial biogenesis and oxidative capacity. Required for the efficient induction of MT-CO2, MT-CO3, COX4I1, TFB1M, TFB2M, POLRMT and SIRT3 by PPARGC1A. Positively regulates the PPARGC1A/ESRRG-induced expression of CKMT2, TNNI3 and SLC2A4 and negatively regulates the PPARGC1A/ESRRG-induced expression of PDK4. The polypeptide is PGC-1 and ERR-induced regulator in muscle protein 1 (Perm1) (Mus musculus (Mouse)).